The primary structure comprises 421 residues: MTKDIAQVMAEVGRKAKAAAAPLSIATNEQKNKALNAAADAILEARADILEANRLDLANAEKNGMAASFVDRLTLNEARIDAIAEGIRAIATLPDPVGEVIAEWDRPNGLHIERVRTPLGVIGVIYESRPNVTADAGALCLKAGNAVILRGGSDSAHSSAAIYKALVKGLEAANLPADAIQIVPVTDRAAVGEMLKGLGGAIDVIVPRGGKSLVARVQSEARVPVFAHLEGICHLYIDKSADLDMARRIALDAKMRRTGICGAAETLLVDRAVASTHLAPILGDLAAGGCEIRGSAEVLALYPAAKPATEEDWSTEYLDAIISVALVDGISGAIDHINRYSSHHTEAIVAEDAQTVARFFNEIDSAILLHNASTQFADGGEFGMGAEIGIATGKMHARGPVGVEQLTSFKYRVRGSGQVRG.

The protein belongs to the gamma-glutamyl phosphate reductase family.

The protein localises to the cytoplasm. The catalysed reaction is L-glutamate 5-semialdehyde + phosphate + NADP(+) = L-glutamyl 5-phosphate + NADPH + H(+). Its pathway is amino-acid biosynthesis; L-proline biosynthesis; L-glutamate 5-semialdehyde from L-glutamate: step 2/2. In terms of biological role, catalyzes the NADPH-dependent reduction of L-glutamate 5-phosphate into L-glutamate 5-semialdehyde and phosphate. The product spontaneously undergoes cyclization to form 1-pyrroline-5-carboxylate. This chain is Gamma-glutamyl phosphate reductase, found in Brucella melitensis biotype 1 (strain ATCC 23456 / CCUG 17765 / NCTC 10094 / 16M).